Here is a 95-residue protein sequence, read N- to C-terminus: Large ribosomal subunit protein uL23 (95 aa).

The protein belongs to the universal ribosomal protein uL23 family. As to quaternary structure, part of the 50S ribosomal subunit. Contacts protein L29, and trigger factor when it is bound to the ribosome.

In terms of biological role, one of the early assembly proteins it binds 23S rRNA. One of the proteins that surrounds the polypeptide exit tunnel on the outside of the ribosome. Forms the main docking site for trigger factor binding to the ribosome. The polypeptide is Large ribosomal subunit protein uL23 (Leuconostoc mesenteroides subsp. mesenteroides (strain ATCC 8293 / DSM 20343 / BCRC 11652 / CCM 1803 / JCM 6124 / NCDO 523 / NBRC 100496 / NCIMB 8023 / NCTC 12954 / NRRL B-1118 / 37Y)).